We begin with the raw amino-acid sequence, 114 residues long: FK506-binding protein 1 (114 aa).

Residues 26-114 (GDLVTIHYTG…VFDVELLKIN (89 aa)) form the PPIase FKBP-type domain.

It belongs to the FKBP-type PPIase family. FKBP1 subfamily.

It localises to the cytoplasm. The catalysed reaction is [protein]-peptidylproline (omega=180) = [protein]-peptidylproline (omega=0). With respect to regulation, inhibited by both FK506 and rapamycin. Its function is as follows. PPIases accelerate the folding of proteins. It catalyzes the cis-trans isomerization of proline imidic peptide bonds in oligopeptides. This is FK506-binding protein 1 (FPR1) from Kluyveromyces lactis (strain ATCC 8585 / CBS 2359 / DSM 70799 / NBRC 1267 / NRRL Y-1140 / WM37) (Yeast).